The chain runs to 152 residues: Deoxyuridine 5'-triphosphate nucleotidohydrolase (152 aa).

Substrate-binding positions include 71-73, Asn-84, 88-90, and Met-98; these read RSG and LID.

It belongs to the dUTPase family. The cofactor is Mg(2+).

The enzyme catalyses dUTP + H2O = dUMP + diphosphate + H(+). Its pathway is pyrimidine metabolism; dUMP biosynthesis; dUMP from dCTP (dUTP route): step 2/2. This enzyme is involved in nucleotide metabolism: it produces dUMP, the immediate precursor of thymidine nucleotides and it decreases the intracellular concentration of dUTP so that uracil cannot be incorporated into DNA. The sequence is that of Deoxyuridine 5'-triphosphate nucleotidohydrolase from Shewanella sp. (strain MR-7).